Consider the following 444-residue polypeptide: L-ornithine N(5)-monooxygenase (444 aa).

FAD-binding positions include 40-48 and Gln59; that span reads ERQPAFGWH. Lys64 serves as a coordination point for substrate. Val125 provides a ligand contact to FAD. Residues 211–214 and Arg236 each bind NADP(+); that span reads AGQS. Residues 250-253 and Asn280 each bind substrate; that span reads NEIF. 280–282 provides a ligand contact to NADP(+); the sequence is NYA. An FAD-binding site is contributed by 408–410; sequence RCC. Residues 420–432 show a composition bias toward basic residues; sequence SARRSKTGSRPRT. Positions 420–444 are disordered; it reads SARRSKTGSRPRTMKAWPGPRTKND.

Belongs to the lysine N(6)-hydroxylase/L-ornithine N(5)-oxygenase family. Requires FAD as cofactor.

It carries out the reaction L-ornithine + NADPH + O2 = N(5)-hydroxy-L-ornithine + NADP(+) + H2O. It participates in siderophore biosynthesis; ornibactin biosynthesis. Catalyzes the conversion of L-ornithine to N(5)-hydroxyornithine, the first step in the biosynthesis of all hydroxamate-containing siderophores, such as ornibactin. In Burkholderia cepacia (Pseudomonas cepacia), this protein is L-ornithine N(5)-monooxygenase.